Here is a 119-residue protein sequence, read N- to C-terminus: Ribonuclease P protein component (119 aa).

It belongs to the RnpA family. In terms of assembly, consists of a catalytic RNA component (M1 or rnpB) and a protein subunit.

It carries out the reaction Endonucleolytic cleavage of RNA, removing 5'-extranucleotides from tRNA precursor.. Its function is as follows. RNaseP catalyzes the removal of the 5'-leader sequence from pre-tRNA to produce the mature 5'-terminus. It can also cleave other RNA substrates such as 4.5S RNA. The protein component plays an auxiliary but essential role in vivo by binding to the 5'-leader sequence and broadening the substrate specificity of the ribozyme. This Nitrosomonas europaea (strain ATCC 19718 / CIP 103999 / KCTC 2705 / NBRC 14298) protein is Ribonuclease P protein component.